A 204-amino-acid chain; its full sequence is MSNPIKIGIGGPVGAGKTQLIEKVVKRLAKEMSIGVITNDIYTKEDEKILVNTGVLPEDRIIGVETGGCPHTAIREDASMNFAAIDELLERNDDIELIFIESGGDNLAATFSPELVDFSIYIIDVAQGEKIPRKGGQGMIKSDFFIINKTDLAPYVGASLDQMAKDTEVFRGNRPFAFTNLKTDEGLEKVIEWIEHDVLLKGLT.

11–18 (GPVGAGKT) contacts GTP.

This sequence belongs to the SIMIBI class G3E GTPase family. UreG subfamily. Homodimer. UreD, UreF and UreG form a complex that acts as a GTP-hydrolysis-dependent molecular chaperone, activating the urease apoprotein by helping to assemble the nickel containing metallocenter of UreC. The UreE protein probably delivers the nickel.

It is found in the cytoplasm. Facilitates the functional incorporation of the urease nickel metallocenter. This process requires GTP hydrolysis, probably effectuated by UreG. This chain is Urease accessory protein UreG, found in Staphylococcus epidermidis (strain ATCC 12228 / FDA PCI 1200).